A 250-amino-acid chain; its full sequence is Large ribosomal subunit protein uL30B (250 aa).

It belongs to the universal ribosomal protein uL30 family. In terms of assembly, component of the large ribosomal subunit (LSU). Mature yeast ribosomes consist of a small (40S) and a large (60S) subunit. The 40S small subunit contains 1 molecule of ribosomal RNA (18S rRNA) and at least 33 different proteins. The large 60S subunit contains 3 rRNA molecules (25S, 5.8S and 5S rRNA) and at least 46 different proteins.

The protein resides in the cytoplasm. It is found in the nucleus. Its subcellular location is the nucleolus. In terms of biological role, component of the ribosome, a large ribonucleoprotein complex responsible for the synthesis of proteins in the cell. The small ribosomal subunit (SSU) binds messenger RNAs (mRNAs) and translates the encoded message by selecting cognate aminoacyl-transfer RNA (tRNA) molecules. The large subunit (LSU) contains the ribosomal catalytic site termed the peptidyl transferase center (PTC), which catalyzes the formation of peptide bonds, thereby polymerizing the amino acids delivered by tRNAs into a polypeptide chain. The nascent polypeptides leave the ribosome through a tunnel in the LSU and interact with protein factors that function in enzymatic processing, targeting, and the membrane insertion of nascent chains at the exit of the ribosomal tunnel. The sequence is that of Large ribosomal subunit protein uL30B (rpl702) from Schizosaccharomyces pombe (strain 972 / ATCC 24843) (Fission yeast).